The following is a 231-amino-acid chain: GFP-like fluorescent chromoprotein FP506 (231 aa).

Residues 66–68 (NYG) constitute a cross-link (5-imidazolinone (Asn-Gly)). 2,3-didehydrotyrosine is present on Tyr-67.

Belongs to the GFP family. Post-translationally, contains a chromophore consisting of modified amino acid residues. The chromophore is formed by autocatalytic backbone condensation between Xaa-N and Gly-(N+2), and oxidation of Tyr-(N+1) to didehydrotyrosine. Maturation of the chromophore requires nothing other than molecular oxygen. The precise stereochemistry of the tyrosine has not been determined. In terms of tissue distribution, tentacle and oral disk.

In terms of biological role, pigment protein that is yellow-green in color. The polypeptide is GFP-like fluorescent chromoprotein FP506 (Zoanthus sp. (Green polyp)).